A 404-amino-acid polypeptide reads, in one-letter code: Glucose-1-phosphate adenylyltransferase (404 aa).

Alpha-D-glucose 1-phosphate-binding positions include Tyr-99, Gly-164, 179–180, and Ser-197; that span reads EK.

The protein belongs to the bacterial/plant glucose-1-phosphate adenylyltransferase family.

The catalysed reaction is alpha-D-glucose 1-phosphate + ATP + H(+) = ADP-alpha-D-glucose + diphosphate. It participates in capsule biogenesis; capsule polysaccharide biosynthesis. It functions in the pathway glycan biosynthesis; glycogen biosynthesis. Functionally, involved in the biosynthesis of ADP-glucose, a building block, required in the biosynthesis of maltose-1-phosphate (M1P) and in the elongation reactions to produce linear alpha-1,4-glucans. Catalyzes the reaction between ATP and alpha-D-glucose 1-phosphate (G1P) to produce pyrophosphate and ADP-Glc. The polypeptide is Glucose-1-phosphate adenylyltransferase (Mycobacterium leprae (strain Br4923)).